The chain runs to 140 residues: Putative 6-pyruvoyl tetrahydrobiopterin synthase (140 aa).

A Zn(2+)-binding site is contributed by His-19. The active-site Proton acceptor is Cys-38. 2 residues coordinate Zn(2+): His-44 and His-46. Catalysis depends on charge relay system residues His-84 and Glu-129.

It belongs to the PTPS family. As to quaternary structure, homohexamer formed of two homotrimers in a head to head fashion. Zn(2+) serves as cofactor.

The catalysed reaction is 7,8-dihydroneopterin 3'-triphosphate = 6-pyruvoyl-5,6,7,8-tetrahydropterin + triphosphate + H(+). It participates in cofactor biosynthesis; tetrahydrobiopterin biosynthesis; tetrahydrobiopterin from 7,8-dihydroneopterin triphosphate: step 1/3. Involved in the biosynthesis of tetrahydrobiopterin, an essential cofactor of aromatic amino acid hydroxylases. Catalyzes the transformation of 7,8-dihydroneopterin triphosphate into 6-pyruvoyl tetrahydropterin. The polypeptide is Putative 6-pyruvoyl tetrahydrobiopterin synthase (ptps-1) (Caenorhabditis elegans).